Here is a 291-residue protein sequence, read N- to C-terminus: 4-diphosphocytidyl-2-C-methyl-D-erythritol kinase (291 aa).

The active site involves Lys-11. ATP is bound at residue 97-107; it reads PVAAGIGGGSS. The active site involves Asp-139.

It belongs to the GHMP kinase family. IspE subfamily.

It carries out the reaction 4-CDP-2-C-methyl-D-erythritol + ATP = 4-CDP-2-C-methyl-D-erythritol 2-phosphate + ADP + H(+). It participates in isoprenoid biosynthesis; isopentenyl diphosphate biosynthesis via DXP pathway; isopentenyl diphosphate from 1-deoxy-D-xylulose 5-phosphate: step 3/6. Catalyzes the phosphorylation of the position 2 hydroxy group of 4-diphosphocytidyl-2C-methyl-D-erythritol. The polypeptide is 4-diphosphocytidyl-2-C-methyl-D-erythritol kinase (Methylorubrum extorquens (strain PA1) (Methylobacterium extorquens)).